The chain runs to 257 residues: Geranylgeranylglyceryl phosphate synthase (257 aa).

Positions 27 and 57 each coordinate Mg(2+). Sn-glycerol 1-phosphate-binding positions include 175-181, 207-208, and 229-230; these read YLEAGSG, GG, and GN.

Belongs to the GGGP/HepGP synthase family. Group II subfamily. The cofactor is Mg(2+).

The protein resides in the cytoplasm. It carries out the reaction sn-glycerol 1-phosphate + (2E,6E,10E)-geranylgeranyl diphosphate = sn-3-O-(geranylgeranyl)glycerol 1-phosphate + diphosphate. It participates in membrane lipid metabolism; glycerophospholipid metabolism. Functionally, prenyltransferase that catalyzes the transfer of the geranylgeranyl moiety of geranylgeranyl diphosphate (GGPP) to the C3 hydroxyl of sn-glycerol-1-phosphate (G1P). This reaction is the first ether-bond-formation step in the biosynthesis of archaeal membrane lipids. This chain is Geranylgeranylglyceryl phosphate synthase, found in Sulfolobus acidocaldarius (strain ATCC 33909 / DSM 639 / JCM 8929 / NBRC 15157 / NCIMB 11770).